The chain runs to 383 residues: Large ribosomal subunit protein uL3 (383 aa).

The protein belongs to the universal ribosomal protein uL3 family.

It is found in the cytoplasm. This is Large ribosomal subunit protein uL3 (RPL3-1) from Encephalitozoon cuniculi (strain GB-M1) (Microsporidian parasite).